A 203-amino-acid chain; its full sequence is Small ribosomal subunit protein uS5 (203 aa).

Residues 1 to 25 (MPGRTRRDGGSESGGKDRRDRRDGG) are compositionally biased toward basic and acidic residues. Residues 1 to 36 (MPGRTRRDGGSESGGKDRRDRRDGGRGGAAQEKTPQ) are disordered. An S5 DRBM domain is found at 36-99 (QFERVVTINR…EEAKKNFFRV (64 aa)).

This sequence belongs to the universal ribosomal protein uS5 family. In terms of assembly, part of the 30S ribosomal subunit. Contacts proteins S4 and S8.

With S4 and S12 plays an important role in translational accuracy. Its function is as follows. Located at the back of the 30S subunit body where it stabilizes the conformation of the head with respect to the body. This chain is Small ribosomal subunit protein uS5, found in Saccharopolyspora erythraea (strain ATCC 11635 / DSM 40517 / JCM 4748 / NBRC 13426 / NCIMB 8594 / NRRL 2338).